The following is a 127-amino-acid chain: Glycine cleavage system H protein (127 aa).

The Lipoyl-binding domain maps to 22 to 104; the sequence is AVVIGITHFA…YEGAWMVKVE (83 aa). K63 bears the N6-lipoyllysine mark.

The protein belongs to the GcvH family. The glycine cleavage system is composed of four proteins: P, T, L and H. Requires (R)-lipoate as cofactor.

The glycine cleavage system catalyzes the degradation of glycine. The H protein shuttles the methylamine group of glycine from the P protein to the T protein. In terms of biological role, is also involved in protein lipoylation via its role as an octanoyl/lipoyl carrier protein intermediate. The polypeptide is Glycine cleavage system H protein (Bacillus mycoides (strain KBAB4) (Bacillus weihenstephanensis)).